The following is a 638-amino-acid chain: MKGGCVSQWKAAAGFLFCVMVFASAERPVFTNHFLVELHKGGEDEARQVAAEHGFGVRKLPFAEGLYHFYHNGLAKAKRRRSLHHKQQLERDPRVKMALQQEGFDRKKRGYRDINEIDINMNDPLFTKQWYLINTGQADGTPGLDLNVAEAWELGYTGKGVTIGIMDDGIDYLHPDLASNYNAEASYDFSSNDPYPYPRYTDDWFNSHGTRCAGEVSAAANNNICGVGVAYNSKVAGIRMLDQPFMTDIIEASSISHMPQLIDIYSASWGPTDNGKTVDGPRELTLQAMADGVNKGRGGKGSIYVWASGDGGSYDDCNCDGYASSMWTISINSAINDGRTALYDESCSSTLASTFSNGRKRNPEAGVATTDLYGNCTLRHSGTSAAAPEAAGVFALALEANLGLTWRDMQHLTVLTSKRNQLHDEVHQWRRNGVGLEFNHLFGYGVLDAGAMVKMAKDWKTVPERFHCVGGSVQDPEKIPSTGKLVLTLTTDACEGKENFVRYLEHVQAVITVNATRRGDLNINMTSPMGTKSILLSRRPRDDDSKVGFDKWPFMTTHTWGEDARGTWTLELGFVGSAPQKGVLKEWTLMLHGTQSAPYIDQVVRDYQSKLAMSKKEELEEELDEAVERSLKSILNKN.

An N-terminal signal peptide occupies residues 1–25 (MKGGCVSQWKAAAGFLFCVMVFASA). A propeptide spanning residues 26–109 (ERPVFTNHFL…QQEGFDRKKR (84 aa)) is cleaved from the precursor. The 325-residue stretch at 129-453 (QWYLINTGQA…YGVLDAGAMV (325 aa)) folds into the Peptidase S8 domain. Catalysis depends on charge relay system residues aspartate 167 and histidine 208. 2 cysteine pairs are disulfide-bonded: cysteine 225-cysteine 376 and cysteine 317-cysteine 347. An N-linked (GlcNAc...) asparagine glycan is attached at asparagine 375. Catalysis depends on serine 384, which acts as the Charge relay system. Positions 461-597 (TVPERFHCVG…TLMLHGTQSA (137 aa)) constitute a P/Homo B domain. The cysteines at positions 468 and 494 are disulfide-linked. Residues asparagine 514 and asparagine 524 are each glycosylated (N-linked (GlcNAc...) asparagine).

Belongs to the peptidase S8 family. Furin subfamily.

The protein localises to the cytoplasmic vesicle. Its subcellular location is the secretory vesicle. The protein resides in the secreted. It carries out the reaction Release of protein hormones and neuropeptides from their precursors, generally by hydrolysis of -Lys-Arg-|- bonds.. Its function is as follows. Serine endopeptidase which is involved in the processing of hormone and other protein precursors at sites comprised of pairs of basic amino acid residues. Responsible for the release of glucagon from proglucagon in pancreatic A cells. This Pongo abelii (Sumatran orangutan) protein is Neuroendocrine convertase 2 (PCSK2).